Here is a 593-residue protein sequence, read N- to C-terminus: V-type sodium ATPase catalytic subunit A (593 aa).

232-239 contributes to the ATP binding site; that stretch reads GPFGAGKT.

This sequence belongs to the ATPase alpha/beta chains family.

The enzyme catalyses 4 Na(+)(in) + ATP + H2O = 4 Na(+)(out) + ADP + phosphate + H(+). Involved in ATP-driven sodium extrusion. The sequence is that of V-type sodium ATPase catalytic subunit A (ntpA) from Enterococcus hirae (strain ATCC 9790 / DSM 20160 / JCM 8729 / LMG 6399 / NBRC 3181 / NCIMB 6459 / NCDO 1258 / NCTC 12367 / WDCM 00089 / R).